The following is a 318-amino-acid chain: Gamma-glutamyl hydrolase (318 aa).

The signal sequence occupies residues 1 to 24 (MARLGRLLSVLGLVLCGATGLGLS). Residues 25 to 318 (APPAPTPKKP…SSFQQSYIFD (294 aa)) form the Gamma-glutamyl hydrolase domain. N116 carries an N-linked (GlcNAc...) asparagine glycan. Catalysis depends on C134, which acts as the Nucleophile. N163 and N203 each carry an N-linked (GlcNAc...) asparagine glycan. The Proton donor role is filled by H244. Residue N307 is glycosylated (N-linked (GlcNAc...) asparagine).

It belongs to the peptidase C26 family. Homodimer.

Its subcellular location is the secreted. It localises to the extracellular space. The protein localises to the lysosome. The protein resides in the melanosome. The catalysed reaction is (6S)-5,6,7,8-tetrahydrofolyl-(gamma-L-Glu)(n) + (n-1) H2O = (6S)-5,6,7,8-tetrahydrofolate + (n-1) L-glutamate. Functionally, hydrolyzes the polyglutamate sidechains of pteroylpolyglutamates. Progressively removes gamma-glutamyl residues from pteroylpoly-gamma-glutamate to yield pteroyl-alpha-glutamate (folic acid) and free glutamate. May play an important role in the bioavailability of dietary pteroylpolyglutamates and in the metabolism of pteroylpolyglutamates and antifolates. Exhibits either endo- or exopeptidase activity depending upon the tissue of origin. When secreted, it acts primarily as an endopeptidase. This Bos taurus (Bovine) protein is Gamma-glutamyl hydrolase (GGH).